The following is a 391-amino-acid chain: 3-ketoacyl-CoA thiolase (391 aa).

The Acyl-thioester intermediate role is filled by C95. Catalysis depends on proton acceptor residues H347 and C377.

Belongs to the thiolase-like superfamily. Thiolase family. As to quaternary structure, heterotetramer of two alpha chains (FadB) and two beta chains (FadA).

It is found in the cytoplasm. It catalyses the reaction an acyl-CoA + acetyl-CoA = a 3-oxoacyl-CoA + CoA. The protein operates within lipid metabolism; fatty acid beta-oxidation. In terms of biological role, catalyzes the final step of fatty acid oxidation in which acetyl-CoA is released and the CoA ester of a fatty acid two carbons shorter is formed. This Ectopseudomonas oleovorans (Pseudomonas oleovorans) protein is 3-ketoacyl-CoA thiolase.